Here is a 342-residue protein sequence, read N- to C-terminus: MSAFTPASEVLLRHSDDFEQSRILFAGDMQDDLPGRFECAASRAHTQQYHHWQLLSRQMEDRVRFSLVAEQSDVADCDTLIYYWPKNKPEAQFQLMNLLSMMPVGCDIFVVGENRSGVRSAESMLAEYATLNKIDSARRCGLYHGRLDKQPTFDAEKYWGEYQLDGLTIKTLPGVFSRDGLDVGSQLLLSTFTPHTKGKVLDVGCGAGVLSAVLASHSPKVRLTLSDVSAPAVEASRATLAANGLEGDVFASNVFSEVTGRFDIIISNPPFHDGMETSLEAAQTLIRGAVRHLGSGGELRIVANAFLPYPKLLDEIFGFHEVLAQTGRFKVYRTVMTRQAKK.

Belongs to the methyltransferase superfamily. RsmC family. In terms of assembly, monomer.

It localises to the cytoplasm. The catalysed reaction is guanosine(1207) in 16S rRNA + S-adenosyl-L-methionine = N(2)-methylguanosine(1207) in 16S rRNA + S-adenosyl-L-homocysteine + H(+). Its function is as follows. Specifically methylates the guanine in position 1207 of 16S rRNA in the 30S particle. This Enterobacter sp. (strain 638) protein is Ribosomal RNA small subunit methyltransferase C.